The sequence spans 540 residues: Alanine aminotransferase 2, mitochondrial (540 aa).

The transit peptide at methionine 1–phenylalanine 46 directs the protein to the mitochondrion. Positions glycine 11–proline 40 are disordered. Residues leucine 28 to proline 40 are compositionally biased toward low complexity. N6-(pyridoxal phosphate)lysine is present on lysine 357.

The protein belongs to the class-I pyridoxal-phosphate-dependent aminotransferase family. Alanine aminotransferase subfamily. Homodimer. The cofactor is pyridoxal 5'-phosphate. In terms of processing, the N-terminus is blocked. As to expression, expressed in shoots, essentially in leaves and flowers, mostly in vascular tissues. Also detected in stems and roots.

It is found in the mitochondrion. The catalysed reaction is L-alanine + 2-oxoglutarate = pyruvate + L-glutamate. The protein operates within photosynthesis; C4 acid pathway. It participates in amino-acid degradation; L-alanine degradation via transaminase pathway; pyruvate from L-alanine: step 1/1. The sequence is that of Alanine aminotransferase 2, mitochondrial (ALAAT2) from Arabidopsis thaliana (Mouse-ear cress).